The following is a 296-amino-acid chain: 33 kDa chaperonin (296 aa).

2 disulfide bridges follow: Cys236/Cys238 and Cys269/Cys272.

This sequence belongs to the HSP33 family. Post-translationally, under oxidizing conditions two disulfide bonds are formed involving the reactive cysteines. Under reducing conditions zinc is bound to the reactive cysteines and the protein is inactive.

The protein localises to the cytoplasm. Functionally, redox regulated molecular chaperone. Protects both thermally unfolding and oxidatively damaged proteins from irreversible aggregation. Plays an important role in the bacterial defense system toward oxidative stress. The sequence is that of 33 kDa chaperonin from Lactobacillus helveticus (strain DPC 4571).